Consider the following 513-residue polypeptide: Na(+)/H(+) antiporter NhaB (513 aa).

Helical transmembrane passes span 23 to 43 (LALI…PFVA), 52 to 72 (IFTL…LLAI), 97 to 117 (LLLM…LFIF), 120 to 140 (LLLS…AAAF), 144 to 164 (FLDA…FYGI), 202 to 222 (LMMH…VGEP), 238 to 258 (FFLR…LTCL), 303 to 323 (AIIG…VGLI), 348 to 368 (TESL…AVII), 391 to 411 (LFYI…VGTI), 447 to 467 (ATPN…APLI), and 475 to 495 (VWMA…CVEF).

The protein belongs to the NhaB Na(+)/H(+) (TC 2.A.34) antiporter family.

It is found in the cell inner membrane. It catalyses the reaction 2 Na(+)(in) + 3 H(+)(out) = 2 Na(+)(out) + 3 H(+)(in). Na(+)/H(+) antiporter that extrudes sodium in exchange for external protons. This is Na(+)/H(+) antiporter NhaB from Escherichia coli O6:K15:H31 (strain 536 / UPEC).